A 217-amino-acid polypeptide reads, in one-letter code: Segregation and condensation protein B (217 aa).

This sequence belongs to the ScpB family. Homodimer. Homodimerization may be required to stabilize the binding of ScpA to the Smc head domains. Component of a cohesin-like complex composed of ScpA, ScpB and the Smc homodimer, in which ScpA and ScpB bind to the head domain of Smc. The presence of the three proteins is required for the association of the complex with DNA.

Its subcellular location is the cytoplasm. In terms of biological role, participates in chromosomal partition during cell division. May act via the formation of a condensin-like complex containing Smc and ScpA that pull DNA away from mid-cell into both cell halves. In Geobacillus kaustophilus (strain HTA426), this protein is Segregation and condensation protein B.